We begin with the raw amino-acid sequence, 103 residues long: Protein RALF-like 18 (103 aa).

Residues 1–32 form the signal peptide; sequence MMNNMKLLIIAVMIISAALLPALVVGSRPVKC. Residues 33-58 constitute a propeptide, removed in mature form; it reads DNCMDGGEKEEIMKMSSGVDVSHRIL. Cys-92 and Cys-98 are disulfide-bonded.

This sequence belongs to the plant rapid alkalinization factor (RALF) family. Post-translationally, proteolytically cleaved, probably by S1P, a subtilisin-like serine protease (subtilase).

The protein resides in the secreted. Cell signaling peptide that may regulate plant stress, growth, and development. Mediates a rapid alkalinization of extracellular space by mediating a transient increase in the cytoplasmic Ca(2+) concentration leading to a calcium-dependent signaling events through a cell surface receptor and a concomitant activation of some intracellular mitogen-activated protein kinases. In Arabidopsis thaliana (Mouse-ear cress), this protein is Protein RALF-like 18 (RALFL18).